An 83-amino-acid chain; its full sequence is Small ribosomal subunit protein eS21 (83 aa).

Methionine 1 carries the post-translational modification N-acetylmethionine. Lysine 41 is covalently cross-linked (Glycyl lysine isopeptide (Lys-Gly) (interchain with G-Cter in SUMO2)). Lysine 81 carries the N6-acetyllysine modification.

The protein belongs to the eukaryotic ribosomal protein eS21 family. Component of the 40S small ribosomal subunit.

It is found in the cytoplasm. The protein resides in the cytosol. Its subcellular location is the rough endoplasmic reticulum. In terms of biological role, component of the small ribosomal subunit. The ribosome is a large ribonucleoprotein complex responsible for the synthesis of proteins in the cell. This Sus scrofa (Pig) protein is Small ribosomal subunit protein eS21 (RPS21).